We begin with the raw amino-acid sequence, 370 residues long: E3 ubiquitin-protein ligase E3D (370 aa).

A2 carries the N-acetylalanine modification. The BRAT1-like motif motif lies at 129 to 159; sequence PLPSENWSALVGEWCCHPDPFANKPLHPREN. A Zn(2+)-binding site is contributed by C144. Residues 214–236 are interaction with UBE2C; sequence QPSEGSFPNIPRSQFVQSVIARC. The tract at residues 332 to 368 is HECT-like; the sequence is LPSTTCLELLLILSRNNASLPLSLRQMNSFQLWCSHC.

In terms of assembly, interacts with UBE2C/UbcH10 (E2 ubiquitin-conjugating enzyme). In vitro, interacts with cyclin-B. Post-translationally, ubiquitinated by UBCH10 (E2 ubiquitin-conjugating enzyme).

Its subcellular location is the cytoplasm. It carries out the reaction S-ubiquitinyl-[E2 ubiquitin-conjugating enzyme]-L-cysteine + [acceptor protein]-L-lysine = [E2 ubiquitin-conjugating enzyme]-L-cysteine + N(6)-ubiquitinyl-[acceptor protein]-L-lysine.. It participates in protein modification; protein ubiquitination. In terms of biological role, E3 ubiquitin-protein ligase which accepts ubiquitin from specific E2 ubiquitin-conjugating enzymes, and transfers it to substrates, generally promoting their degradation by the proteasome. Independently of its E3 ubiquitin-protein ligase activity, acts as an inhibitor of CPSF3 endonuclease activity by blocking CPSF3 active site. The polypeptide is E3 ubiquitin-protein ligase E3D (Ube3d) (Rattus norvegicus (Rat)).